A 111-amino-acid polypeptide reads, in one-letter code: Small ribosomal subunit protein bS16 (111 aa).

It belongs to the bacterial ribosomal protein bS16 family.

The chain is Small ribosomal subunit protein bS16 from Rickettsia typhi (strain ATCC VR-144 / Wilmington).